A 279-amino-acid polypeptide reads, in one-letter code: MEKNVCKMTDDSIFLIDIEKILKTKAGKKYKYIPRFVVSYLKHIVHQDELNVFLKDSKNKVGVDFLEACMEFLDAKVEIKGLENLPENGKCTFVSNHPLGGQDGVALGYILGKHYNGNVRYLVNDLLMNLHGLAPLCIPINKTGSQSRDFPKMVEAGFASDNHIIMFPAGLCSRRQGGEIKDLEWKKTFVTKSIETHRDVVPLHFEGRNSDFFYNLANICKALGIKFNIAMLYLADEMLKNRHKTFTLTIGKPIPWQTFDKTKTPAQWAQFVKDVVYKL.

Belongs to the O-acyltransferase GlsA family.

The catalysed reaction is a lyso-glycine lipid + a fatty acyl-[ACP] = a glycine lipid + holo-[ACP]. It catalyses the reaction N-[(3R)-3-hydroxyhexadecanoyl]-glycine + hexadecanoyl-[ACP] = N-[(3R)-3-(hexadecanoyloxy)hexadecanoyl]-glycine + holo-[ACP]. Its pathway is lipid metabolism. In terms of biological role, is involved in the production of glycine lipids (GL), which are phosphorus-free membrane lipids. Catalyzes the second step of GL biosynthesis, i.e. the O-acylation of the hydroxyl group of lyso-glycine lipids, resulting in the production of the mature diacylated glycine lipids. This Phocaeicola vulgatus (strain ATCC 8482 / DSM 1447 / JCM 5826 / CCUG 4940 / NBRC 14291 / NCTC 11154) (Bacteroides vulgatus) protein is Lyso-glycine lipid O-acyltransferase.